The following is a 189-amino-acid chain: Adenylate kinase (189 aa).

ATP is bound at residue 10 to 15 (GAGKGT). An NMP region spans residues 30 to 59 (STGDIFRANVSGGTELGKKAQAYMDRGDLV). AMP-binding positions include Thr31, Arg36, 57 to 59 (DLV), 85 to 88 (GFPR), and Gln92. The LID stretch occupies residues 126–136 (ERARIDNRSDD). An ATP-binding site is contributed by Arg127. Arg133 and Arg144 together coordinate AMP. Residue Gly172 coordinates ATP.

It belongs to the adenylate kinase family. In terms of assembly, monomer.

Its subcellular location is the cytoplasm. The catalysed reaction is AMP + ATP = 2 ADP. The protein operates within purine metabolism; AMP biosynthesis via salvage pathway; AMP from ADP: step 1/1. In terms of biological role, catalyzes the reversible transfer of the terminal phosphate group between ATP and AMP. Plays an important role in cellular energy homeostasis and in adenine nucleotide metabolism. The protein is Adenylate kinase of Thermobifida fusca (strain YX).